Here is a 149-residue protein sequence, read N- to C-terminus: General odorant-binding protein 57c (149 aa).

A signal peptide spans 1–16 (MLKLWLICILTVSVVS). 3 disulfides stabilise this stretch: C32–C70, C66–C117, and C106–C126.

It belongs to the PBP/GOBP family.

Functionally, present in the aqueous fluid surrounding olfactory sensory dendrites and are thought to aid in the capture and transport of hydrophobic odorants into and through this fluid. This is General odorant-binding protein 57c from Drosophila melanogaster (Fruit fly).